The primary structure comprises 337 residues: Serpentine receptor class delta-50 (337 aa).

Transmembrane regions (helical) follow at residues Val10 to Leu30, Ile48 to Gln68, Val107 to Phe127, Gln147 to Asn167, Ser202 to Phe222, Gly250 to Ile270, and Leu280 to Leu300.

This sequence belongs to the nematode receptor-like protein srd family.

The protein localises to the membrane. The chain is Serpentine receptor class delta-50 from Caenorhabditis elegans.